Consider the following 128-residue polypeptide: Ribonuclease P protein component (128 aa).

Belongs to the RnpA family. As to quaternary structure, consists of a catalytic RNA component (M1 or rnpB) and a protein subunit.

The catalysed reaction is Endonucleolytic cleavage of RNA, removing 5'-extranucleotides from tRNA precursor.. Its function is as follows. RNaseP catalyzes the removal of the 5'-leader sequence from pre-tRNA to produce the mature 5'-terminus. It can also cleave other RNA substrates such as 4.5S RNA. The protein component plays an auxiliary but essential role in vivo by binding to the 5'-leader sequence and broadening the substrate specificity of the ribozyme. The sequence is that of Ribonuclease P protein component from Prochlorococcus marinus (strain NATL1A).